Reading from the N-terminus, the 368-residue chain is Galactoside 2-alpha-L-fucosyltransferase Sec1 (368 aa).

At 1 to 20 (MPSDSCLLSLTVLQRLRAIC) the chain is on the cytoplasmic side. A helical; Signal-anchor for type II membrane protein transmembrane segment spans residues 21-41 (PPLSTFYLFFVIFVVSTIFHC). Residues 42–368 (HRRLGLVPAP…APKRHWGALL (327 aa)) lie on the Lumenal side of the membrane. 3 N-linked (GlcNAc...) asparagine glycosylation sites follow: Asn-195, Asn-289, and Asn-315.

This sequence belongs to the glycosyltransferase 11 family.

The protein localises to the golgi apparatus. It localises to the golgi stack membrane. The catalysed reaction is a ganglioside GM1 + GDP-beta-L-fucose = a ganglioside Fuc-GM1 + GDP + H(+). It functions in the pathway protein modification; protein glycosylation. In terms of biological role, catalyzes the transfer of alpha 1,2-linked fucose to ganglioside GM1 and galacto-N-biose. The chain is Galactoside 2-alpha-L-fucosyltransferase Sec1 from Mus musculus (Mouse).